A 526-amino-acid polypeptide reads, in one-letter code: Peptide chain release factor 3 (526 aa).

A tr-type G domain is found at 8-277 (NKRRTFAIIS…GLTEWAPKPQ (270 aa)). GTP is bound by residues 17–24 (SHPDAGKT), 85–89 (DTPGH), and 139–142 (NKLD).

This sequence belongs to the TRAFAC class translation factor GTPase superfamily. Classic translation factor GTPase family. PrfC subfamily.

The protein localises to the cytoplasm. Its function is as follows. Increases the formation of ribosomal termination complexes and stimulates activities of RF-1 and RF-2. It binds guanine nucleotides and has strong preference for UGA stop codons. It may interact directly with the ribosome. The stimulation of RF-1 and RF-2 is significantly reduced by GTP and GDP, but not by GMP. In Actinobacillus pleuropneumoniae serotype 7 (strain AP76), this protein is Peptide chain release factor 3.